The chain runs to 127 residues: MADITKEQVVSFIENMSVLELAELVKELEEKFGVSAAAPVAVAAAPGAAAGAAAAEEKDEFDVVLKSAGDKKINVIKVVRAATGLGLKEAKDMVDGAPQTIKEAMPKAEAEELKKQLEEAGAAVELK.

This sequence belongs to the bacterial ribosomal protein bL12 family. Homodimer. Part of the ribosomal stalk of the 50S ribosomal subunit. Forms a multimeric L10(L12)X complex, where L10 forms an elongated spine to which 2 to 4 L12 dimers bind in a sequential fashion. Binds GTP-bound translation factors.

In terms of biological role, forms part of the ribosomal stalk which helps the ribosome interact with GTP-bound translation factors. Is thus essential for accurate translation. This is Large ribosomal subunit protein bL12 from Syntrophotalea carbinolica (strain DSM 2380 / NBRC 103641 / GraBd1) (Pelobacter carbinolicus).